We begin with the raw amino-acid sequence, 365 residues long: Protein RecA (365 aa).

Residue 73-80 (GPESSGKT) participates in ATP binding.

It belongs to the RecA family.

It localises to the cytoplasm. Its function is as follows. Can catalyze the hydrolysis of ATP in the presence of single-stranded DNA, the ATP-dependent uptake of single-stranded DNA by duplex DNA, and the ATP-dependent hybridization of homologous single-stranded DNAs. It interacts with LexA causing its activation and leading to its autocatalytic cleavage. The protein is Protein RecA of Prochlorococcus marinus (strain MIT 9301).